Here is a 422-residue protein sequence, read N- to C-terminus: MIRLTQYLQSGVKPALGCTEPGAIAFAVSRACKDLPEDEILESIEVKTSINIYKNGMYVVIPGTNGARGNKIAAALGAICGDPSLKLRALKSCNDSHIEKAKRMIASGKVKLSCLRDKPGVYIDVTVKTRNHAARCVIDGDHTAISLVARDGVIVFKGSQREREEPVFFEGEKFPIDEIIETVERIDAKDVDFIFEGVKMNLEIATYAMNEGISLCKPVKENNNSEEELAIRIKRFCAAASFARMAGVPLPVMSSGGSGNQGIVTILPVAITGKSYGKTREEIAKAIALSHLVLGYIKSRLGKVTPTCGAANAAGPAAAAGIVYMLNGSTEQISQAMSTVFSSTLGMICDGAKEACAYKVGFSGEVAYNSAMLALDKSCVAGPQGVVGKTIEETIENIREISTRTALELENTIIDILEKYNK.

It belongs to the UPF0597 family.

The polypeptide is UPF0597 protein Kole_0595 (Kosmotoga olearia (strain ATCC BAA-1733 / DSM 21960 / TBF 19.5.1)).